The primary structure comprises 309 residues: Homoserine kinase (309 aa).

An ATP-binding site is contributed by 91-101 (PIGSGLGSSAC).

Belongs to the GHMP kinase family. Homoserine kinase subfamily.

Its subcellular location is the cytoplasm. The catalysed reaction is L-homoserine + ATP = O-phospho-L-homoserine + ADP + H(+). It participates in amino-acid biosynthesis; L-threonine biosynthesis; L-threonine from L-aspartate: step 4/5. Functionally, catalyzes the ATP-dependent phosphorylation of L-homoserine to L-homoserine phosphate. The chain is Homoserine kinase from Salmonella agona (strain SL483).